The primary structure comprises 346 residues: N-acetyl-gamma-glutamyl-phosphate reductase (346 aa).

Residue C149 is part of the active site.

Belongs to the NAGSA dehydrogenase family. Type 1 subfamily.

The protein localises to the cytoplasm. It carries out the reaction N-acetyl-L-glutamate 5-semialdehyde + phosphate + NADP(+) = N-acetyl-L-glutamyl 5-phosphate + NADPH + H(+). Its pathway is amino-acid biosynthesis; L-arginine biosynthesis; N(2)-acetyl-L-ornithine from L-glutamate: step 3/4. Catalyzes the NADPH-dependent reduction of N-acetyl-5-glutamyl phosphate to yield N-acetyl-L-glutamate 5-semialdehyde. This Geobacter sp. (strain M21) protein is N-acetyl-gamma-glutamyl-phosphate reductase.